A 124-amino-acid chain; its full sequence is Glycine cleavage system H protein (124 aa).

In terms of domain architecture, Lipoyl-binding spans leucine 22 to lysine 104. Residue lysine 63 is modified to N6-lipoyllysine.

The protein belongs to the GcvH family. The glycine cleavage system is composed of four proteins: P, T, L and H. The cofactor is (R)-lipoate.

In terms of biological role, the glycine cleavage system catalyzes the degradation of glycine. The H protein shuttles the methylamine group of glycine from the P protein to the T protein. This Acinetobacter baylyi (strain ATCC 33305 / BD413 / ADP1) protein is Glycine cleavage system H protein.